Consider the following 641-residue polypeptide: tRNA 5-methylaminomethyl-2-thiouridine biosynthesis bifunctional protein MnmC (641 aa).

The tract at residues 1–219 is tRNA (mnm(5)s(2)U34)-methyltransferase; sequence MTVSKILKQI…PYPICSAAVT (219 aa). An FAD-dependent cmnm(5)s(2)U34 oxidoreductase region spans residues 232–641; the sequence is IGGGVASACL…GKALEVGVEV (410 aa).

The protein in the N-terminal section; belongs to the methyltransferase superfamily. tRNA (mnm(5)s(2)U34)-methyltransferase family. This sequence in the C-terminal section; belongs to the DAO family. FAD serves as cofactor.

It localises to the cytoplasm. It catalyses the reaction 5-aminomethyl-2-thiouridine(34) in tRNA + S-adenosyl-L-methionine = 5-methylaminomethyl-2-thiouridine(34) in tRNA + S-adenosyl-L-homocysteine + H(+). Functionally, catalyzes the last two steps in the biosynthesis of 5-methylaminomethyl-2-thiouridine (mnm(5)s(2)U) at the wobble position (U34) in tRNA. Catalyzes the FAD-dependent demodification of cmnm(5)s(2)U34 to nm(5)s(2)U34, followed by the transfer of a methyl group from S-adenosyl-L-methionine to nm(5)s(2)U34, to form mnm(5)s(2)U34. The protein is tRNA 5-methylaminomethyl-2-thiouridine biosynthesis bifunctional protein MnmC of Shewanella pealeana (strain ATCC 700345 / ANG-SQ1).